A 768-amino-acid polypeptide reads, in one-letter code: Probable beta-glucosidase M (768 aa).

Positions 1-19 (MHAIAGLTGLLAGVSLSYA) are cleaved as a signal peptide. 3 N-linked (GlcNAc...) asparagine glycosylation sites follow: N25, N72, and N259. D287 is an active-site residue. N315, N322, N394, N434, N472, N543, and N651 each carry an N-linked (GlcNAc...) asparagine glycan.

It belongs to the glycosyl hydrolase 3 family.

Its subcellular location is the secreted. It carries out the reaction Hydrolysis of terminal, non-reducing beta-D-glucosyl residues with release of beta-D-glucose.. The protein operates within glycan metabolism; cellulose degradation. Its function is as follows. Beta-glucosidases are one of a number of cellulolytic enzymes involved in the degradation of cellulosic biomass. Catalyzes the last step releasing glucose from the inhibitory cellobiose. This Aspergillus oryzae (strain ATCC 42149 / RIB 40) (Yellow koji mold) protein is Probable beta-glucosidase M (bglM).